The primary structure comprises 219 residues: 3,4-dihydroxy-2-butanone 4-phosphate synthase (219 aa).

D-ribulose 5-phosphate-binding positions include R37–E38, D42, R150–T154, and E174. Residue E38 participates in Mg(2+) binding. Position 153 (H153) interacts with Mg(2+).

This sequence belongs to the DHBP synthase family. In terms of assembly, homodimer. Mg(2+) serves as cofactor. The cofactor is Mn(2+).

It carries out the reaction D-ribulose 5-phosphate = (2S)-2-hydroxy-3-oxobutyl phosphate + formate + H(+). It functions in the pathway cofactor biosynthesis; riboflavin biosynthesis; 2-hydroxy-3-oxobutyl phosphate from D-ribulose 5-phosphate: step 1/1. Its function is as follows. Catalyzes the conversion of D-ribulose 5-phosphate to formate and 3,4-dihydroxy-2-butanone 4-phosphate. The protein is 3,4-dihydroxy-2-butanone 4-phosphate synthase of Edwardsiella ictaluri (strain 93-146).